The primary structure comprises 185 residues: Adenine phosphoribosyltransferase (185 aa).

The protein belongs to the purine/pyrimidine phosphoribosyltransferase family. In terms of assembly, homodimer.

It localises to the cytoplasm. It carries out the reaction AMP + diphosphate = 5-phospho-alpha-D-ribose 1-diphosphate + adenine. It functions in the pathway purine metabolism; AMP biosynthesis via salvage pathway; AMP from adenine: step 1/1. Catalyzes a salvage reaction resulting in the formation of AMP, that is energically less costly than de novo synthesis. The protein is Adenine phosphoribosyltransferase of Corynebacterium glutamicum (strain ATCC 13032 / DSM 20300 / JCM 1318 / BCRC 11384 / CCUG 27702 / LMG 3730 / NBRC 12168 / NCIMB 10025 / NRRL B-2784 / 534).